The chain runs to 600 residues: NAD-dependent malic enzyme, mitochondrial (600 aa).

The transit peptide at 1–68 directs the protein to the mitochondrion; the sequence is MTRTPFTLSL…NMPIAAPVRT (68 aa). Arginine 93 provides a ligand contact to fumarate. Residue tyrosine 138 is the Proton donor of the active site. Arginine 194 lines the (S)-malate pocket. Arginine 194 is a binding site for NAD(+). The active-site Proton acceptor is the lysine 212. Residues glutamate 283, aspartate 284, and aspartate 307 each contribute to the a divalent metal cation site. NAD(+) contacts are provided by glycine 344 and alanine 347. (S)-malate is bound by residues asparagine 458 and asparagine 502.

The protein belongs to the malic enzymes family. Mg(2+) serves as cofactor. Requires Mn(2+) as cofactor.

It localises to the mitochondrion matrix. The protein localises to the cytoplasm. It is found in the cytosol. The protein resides in the nucleus. It catalyses the reaction (S)-malate + NAD(+) = pyruvate + CO2 + NADH. It carries out the reaction oxaloacetate + H(+) = pyruvate + CO2. In terms of biological role, NAD-dependent mitochondrial malic enzyme that catalyzes the oxidative decarboxylation of malate to pyruvate. This Cryptococcus neoformans var. grubii serotype A (strain H99 / ATCC 208821 / CBS 10515 / FGSC 9487) (Filobasidiella neoformans var. grubii) protein is NAD-dependent malic enzyme, mitochondrial.